The chain runs to 417 residues: D-inositol 3-phosphate glycosyltransferase (417 aa).

Histidine 15 is a binding site for 1D-myo-inositol 3-phosphate. Residues 21–22 and glycine 29 contribute to the UDP-N-acetyl-alpha-D-glucosamine site; that span reads QP. Residues 26–31, lysine 84, tyrosine 117, threonine 141, and arginine 161 each bind 1D-myo-inositol 3-phosphate; that span reads DAGGMN. Arginine 241, lysine 246, and valine 299 together coordinate UDP-N-acetyl-alpha-D-glucosamine. Tyrosine 308, arginine 309, and alanine 311 together coordinate Mg(2+). Positions 321 and 329 each coordinate UDP-N-acetyl-alpha-D-glucosamine. Threonine 335 contributes to the Mg(2+) binding site.

Belongs to the glycosyltransferase group 1 family. MshA subfamily. In terms of assembly, homodimer.

It catalyses the reaction 1D-myo-inositol 3-phosphate + UDP-N-acetyl-alpha-D-glucosamine = 1D-myo-inositol 2-acetamido-2-deoxy-alpha-D-glucopyranoside 3-phosphate + UDP + H(+). Its function is as follows. Catalyzes the transfer of a N-acetyl-glucosamine moiety to 1D-myo-inositol 3-phosphate to produce 1D-myo-inositol 2-acetamido-2-deoxy-glucopyranoside 3-phosphate in the mycothiol biosynthesis pathway. In Xylanimonas cellulosilytica (strain DSM 15894 / JCM 12276 / CECT 5975 / KCTC 9989 / LMG 20990 / NBRC 107835 / XIL07), this protein is D-inositol 3-phosphate glycosyltransferase.